The sequence spans 278 residues: MTTRIDTRFAELRKQGRSAFVTFLMAGDPDPATSLAIIKALPRAGADIIEIGMPFTDPMADGPAVQAAGRRALDAGMTLTGTLRMIGEFRKDDDSTPVVLMGYYNPVYIYGVEKFLDDARAAGVDGLIVVDLPPEEDSELCIPAMKAGLNFIRLATPTTDDKRLPAVLANTSGFVYYVSITGITGSAAADSTAVGAAVGRIKRHTSLPVCVGFGIRTPDAARGIAERSDGAVVGSALVDALSASLDAEGKATSGTVQAVASLAAALAEGVRSARQAAE.

Catalysis depends on proton acceptor residues Glu50 and Asp61.

It belongs to the TrpA family. In terms of assembly, tetramer of two alpha and two beta chains.

It catalyses the reaction (1S,2R)-1-C-(indol-3-yl)glycerol 3-phosphate + L-serine = D-glyceraldehyde 3-phosphate + L-tryptophan + H2O. It functions in the pathway amino-acid biosynthesis; L-tryptophan biosynthesis; L-tryptophan from chorismate: step 5/5. Its function is as follows. The alpha subunit is responsible for the aldol cleavage of indoleglycerol phosphate to indole and glyceraldehyde 3-phosphate. This is Tryptophan synthase alpha chain from Nitrobacter winogradskyi (strain ATCC 25391 / DSM 10237 / CIP 104748 / NCIMB 11846 / Nb-255).